We begin with the raw amino-acid sequence, 502 residues long: Maturase K (502 aa).

The protein belongs to the intron maturase 2 family. MatK subfamily.

It localises to the plastid. Its subcellular location is the chloroplast. Usually encoded in the trnK tRNA gene intron. Probably assists in splicing its own and other chloroplast group II introns. In Arabis blepharophylla (Coast rock-cress), this protein is Maturase K.